We begin with the raw amino-acid sequence, 205 residues long: Small ribosomal subunit protein uS4 (205 aa).

Residues 19–45 (IWGRPKSPVNRREYGPGQHGQRRKGKL) form a disordered region. The region spanning 94-157 (SRLDAVVYRA…KQLAIVLEAV (64 aa)) is the S4 RNA-binding domain.

This sequence belongs to the universal ribosomal protein uS4 family. Part of the 30S ribosomal subunit. Contacts protein S5. The interaction surface between S4 and S5 is involved in control of translational fidelity.

Functionally, one of the primary rRNA binding proteins, it binds directly to 16S rRNA where it nucleates assembly of the body of the 30S subunit. In terms of biological role, with S5 and S12 plays an important role in translational accuracy. This chain is Small ribosomal subunit protein uS4, found in Brucella melitensis biotype 2 (strain ATCC 23457).